The chain runs to 270 residues: Replication protein A 32 kDa subunit (270 aa).

Met-1 carries the N-acetylmethionine modification. Residues Ser-4 and Ser-8 each carry the phosphoserine; by PRKDC modification. The tract at residues 20-41 (YTQSPGGFGSPTPSQAEKKSRV) is disordered. Thr-21 carries the post-translational modification Phosphothreonine; by PRKDC. At Ser-23 the chain carries Phosphoserine; by CDK2. Position 29 is a phosphoserine; by CDK1 (Ser-29). A Phosphoserine; by PRKDC modification is found at Ser-33. Residues Lys-37 and Lys-38 each participate in a glycyl lysine isopeptide (Lys-Gly) (interchain with G-Cter in ubiquitin) cross-link. The OB DNA-binding region spans 74 to 148 (VTIVGIIRHA…KSLVAFKIIP (75 aa)). Residues 171 to 192 (KPNSQASAGRPSMSNPGMSEPG) are disordered. The interval 187 to 270 (GMSEPGNFSG…DDHFKSTDAE (84 aa)) is interaction with RAD52, TIPIN, UNG and XPA.

It belongs to the replication factor A protein 2 family. Component of the replication protein A complex (RPA/RP-A), a heterotrimeric complex composed of RPA1, RPA2 and RPA3. Interacts with PRPF19; the PRP19-CDC5L complex is recruited to the sites of DNA repair where it ubiquitinates the replication protein A complex (RPA). Interacts with SERTAD3. Interacts with TIPIN. Interacts with TIMELESS. Interacts with PPP4R2; the interaction is direct, DNA damage-dependent and mediates the recruitment of the PP4 catalytic subunit PPP4C. Interacts (hyperphosphorylated) with RAD51. Interacts with SMARCAL1; the interaction is direct and mediates the recruitment to the RPA complex of SMARCAL1. Interacts with RAD52 and XPA; those interactions are direct and associate RAD52 and XPA to the RPA complex. Interacts with FBH1. Interacts with ETAA1; the interaction is direct and promotes ETAA1 recruitment at stalled replication forks. Interacts with DDI2. Interacts (in unphosphorylated form via N-terminus) with EIF4EBP3; the interaction enhances EIF4EBP3-mediated inhibition of EIF4E-mediated mRNA nuclear export. Interacts with nuclear UNG (isoform 2); this interaction mediates UNG recruitment to RPA-coated single-stranded DNA at stalled replication forks. In terms of processing, differentially phosphorylated throughout the cell cycle, becoming phosphorylated at the G1-S transition and dephosphorylated in late mitosis. Mainly phosphorylated at Ser-23 and Ser-29, by cyclin A-CDK2 and cyclin B-CDK1, respectively during DNA replication and mitosis. Dephosphorylation may require the serine/threonine-protein phosphatase 4. Phosphorylation at Ser-23 and Ser-29 is a prerequisite for further phosphorylation. Becomes hyperphosphorylated on additional residues including Ser-4, Ser-8, Thr-21 and Ser-33 in response to DNA damage. Hyperphosphorylation is mediated by ATM, ATR and PRKDC. Primarily recruited to DNA repair nuclear foci as a hypophosphorylated form it undergoes subsequent hyperphosphorylation, catalyzed by ATR. Hyperphosphorylation is required for RAD51 recruitment to chromatin and efficient DNA repair. Phosphorylation at Thr-21 depends upon RFWD3 presence. DNA damage-induced 'Lys-63'-linked polyubiquitination by PRPF19 mediates ATRIP recruitment to the RPA complex at sites of DNA damage and activation of ATR. Ubiquitinated by RFWD3 at stalled replication forks in response to DNA damage: ubiquitination by RFWD3 does not lead to degradation by the proteasome and promotes removal of the RPA complex from stalled replication forks, promoting homologous recombination.

It localises to the nucleus. The protein localises to the PML body. In terms of biological role, as part of the heterotrimeric replication protein A complex (RPA/RP-A), binds and stabilizes single-stranded DNA intermediates, that form during DNA replication or upon DNA stress. It prevents their reannealing and in parallel, recruits and activates different proteins and complexes involved in DNA metabolism. Thereby, it plays an essential role both in DNA replication and the cellular response to DNA damage. In the cellular response to DNA damage, the RPA complex controls DNA repair and DNA damage checkpoint activation. Through recruitment of ATRIP activates the ATR kinase a master regulator of the DNA damage response. It is required for the recruitment of the DNA double-strand break repair factors RAD51 and RAD52 to chromatin in response to DNA damage. Also recruits to sites of DNA damage proteins like XPA and XPG that are involved in nucleotide excision repair and is required for this mechanism of DNA repair. Also plays a role in base excision repair (BER) probably through interaction with UNG. Also recruits SMARCAL1/HARP, which is involved in replication fork restart, to sites of DNA damage. May also play a role in telomere maintenance. In Mus musculus (Mouse), this protein is Replication protein A 32 kDa subunit.